The chain runs to 368 residues: Putative flavoprotein monooxygenase (368 aa).

FAD-binding positions include Ala-14, Glu-34, Ser-41, 52–53 (IT), Val-110, Ala-307, and Ile-319.

It depends on FAD as a cofactor.

Functionally, FAD-binding protein that may have monooxygenase activity using NADPH and/or NADH as an electron donor. The polypeptide is Putative flavoprotein monooxygenase (Staphylococcus aureus (strain Mu50 / ATCC 700699)).